The primary structure comprises 505 residues: MDLLLLEKTLLGLFAAIIVASIVSKLRGKKFKLPPGPIPVPVFGNWLQVGDDLNHRNLSDYAKKFGEIFLLRMGQRNLVVVSSPELAKEVLHTQGVEFGSRTRNVVFDIFTGKGQDMVFTVYGEHWRKMRRIMTVPFFTNKVVQQYRYGWEEEAARVVEDVKKNPESATNGIVLRRRLQLMMYNNMYRIMFDRRFESEDDPLFVKLKALNGERSRLAQGFEYNYGDFIPILRPFLRGYLRICKEVKERRLQLFKDYFVDERKKFGSTKSMDNNSLKCAIDHILEAQQKGEINEDNVLYIVENINVAAIETTLWSIEWGIAELVNHPEIQKKLRDELETVLGPGVQITEPDTYKLPYLQAVIKETLRLRMAIPLFLPHMNLHDAKLGGYDIPAESKILVNAWFLANNPEHWKKPEEFRPERFLEEESKVEANGNDFRYLPFGVGRRSCPGIILALPILGITIGRLVQNFELLPPPGKSKIDTSEKGGQFSLHILKHSTIVLKPRTF.

A helical transmembrane segment spans residues 3-23; it reads LLLLEKTLLGLFAAIIVASIV. Residues 213–218 and A306 contribute to the (E)-cinnamate site; that span reads RSRLAQ. C447 is a heme binding site.

Belongs to the cytochrome P450 family. Heme serves as cofactor.

It localises to the membrane. It carries out the reaction (E)-cinnamate + reduced [NADPH--hemoprotein reductase] + O2 = (E)-4-coumarate + oxidized [NADPH--hemoprotein reductase] + H2O + H(+). It functions in the pathway phenylpropanoid metabolism; trans-4-coumarate biosynthesis; trans-4-coumarate from trans-cinnamate: step 1/1. Catalyzes the first oxidative step of the phenylpropanoid pathway in higher plants by transforming trans-cinnamate into p-coumarate. The compounds formed by this pathway are essential components for lignification, pollination, and defense against ultraviolet light, predators and pathogens. This Catharanthus roseus (Madagascar periwinkle) protein is Trans-cinnamate 4-monooxygenase (CYP73A4).